Consider the following 443-residue polypeptide: Probable 26S proteasome regulatory subunit 4 (443 aa).

The segment at 1 to 53 (MGQQQSGFGGRGNDRGAGDGEKKEKKKYEAPIPSRIGKKKKGSKGPDAASKLP) is disordered. The segment covering 12-29 (GNDRGAGDGEKKEKKKYE) has biased composition (basic and acidic residues). 229-236 (GCPGTGKT) provides a ligand contact to ATP.

This sequence belongs to the AAA ATPase family.

Its subcellular location is the cytoplasm. It is found in the nucleus. Functionally, the 26S proteasome is involved in the ATP-dependent degradation of ubiquitinated proteins. The regulatory (or ATPase) complex confers ATP dependency and substrate specificity to the 26S complex. May play a role in the degradation of microtubule severing protein mei-1. This is Probable 26S proteasome regulatory subunit 4 (rpt-2) from Caenorhabditis elegans.